The sequence spans 157 residues: DNA gyrase inhibitor (157 aa).

Belongs to the DNA gyrase inhibitor family. Interacts with DNA gyrase.

The protein localises to the cytoplasm. Inhibits the supercoiling activity of DNA gyrase. Acts by inhibiting DNA gyrase at an early step, prior to (or at the step of) binding of DNA by the gyrase. It protects cells against toxins that target DNA gyrase, by inhibiting activity of these toxins and reducing the formation of lethal double-strand breaks in the cell. The chain is DNA gyrase inhibitor from Yersinia enterocolitica serotype O:8 / biotype 1B (strain NCTC 13174 / 8081).